A 341-amino-acid polypeptide reads, in one-letter code: Serine/threonine-protein kinase PDIK1L (341 aa).

Positions 8 to 334 (YDLIREVGRG…LELRLVQIAF (327 aa)) constitute a Protein kinase domain. ATP contacts are provided by residues 14–22 (VGRGSYGVV) and Lys37. Asp164 (proton acceptor) is an active-site residue.

It belongs to the protein kinase superfamily. Ser/Thr protein kinase family.

Its subcellular location is the nucleus. The catalysed reaction is L-seryl-[protein] + ATP = O-phospho-L-seryl-[protein] + ADP + H(+). It catalyses the reaction L-threonyl-[protein] + ATP = O-phospho-L-threonyl-[protein] + ADP + H(+). The sequence is that of Serine/threonine-protein kinase PDIK1L (Pdik1l) from Mus musculus (Mouse).